A 373-amino-acid polypeptide reads, in one-letter code: Sensor protein DegM (373 aa).

Helical transmembrane passes span 27-47 (ILLA…AIAV), 57-77 (LFLL…LCVN), 91-111 (YASL…LYLI), and 122-142 (VAGW…TYLF). Residues 170 to 370 (SIAHEVRNPL…KVVLSLPIEK (201 aa)) enclose the Histidine kinase domain. A Phosphohistidine; by autocatalysis modification is found at His-173.

The protein localises to the cell membrane. It catalyses the reaction ATP + protein L-histidine = ADP + protein N-phospho-L-histidine.. Its function is as follows. Involved in a sensory transduction pathway that enhances the production of minor proteases. This is Sensor protein DegM (degM) from Bacillus sp. (strain B21-2).